A 611-amino-acid chain; its full sequence is MAKMRVRLPMLILLLGVVFLLAASIGIAYGEKDFTKNPPKEREEEEHEPRQQPRPRQQEEQEREHRREEKHDGEPSRGRSQSEESQEEEHERRREHHREREQEQQPRPQRRQEEEEEEEEWQPRRQRPQSRREEREEREQEQGSSSGSQRGSGDERRQHRERRVHREEREQEQDSRSDSRRQRNPYHFSSNRFQTYYRNRNGQIRVLERFNQRTNRLENLQNYRIIEFQSKPNTLILPKHSDADFILVVLNGRATITIVNPDKRQVYNLEQGDALRLPAGTTSYILNPDDNQNLRVAKLAIPINNPGKLYDFYPSTTKDQQSYFSGFSKNTLEATFNTRYEEIERVLLGDDELQENEKQRRGQEQSHQDEGVIVRVSKKQIQELRKHAQSSSGEGKPSESGPFNLRSNKPIYSNKFGNFYEITPDINPQFQDLNISLTFTEINEGALLLPHYNSKAIFIVVVDEGEGNYELVGIRDQQRQQDEQEEEYEQGEEEVRRYSDKLSKGDVFIIPAGHPLSINASSNLRLLGFGINANENQRNFLAGSEDNVIKQLDREVKELTFPGSIEDVERLIKNQQQSYFANAQPQQQQQREKEGRRGRRGPISSILNALY.

Positions 1-30 (MAKMRVRLPMLILLLGVVFLLAASIGIAYG) are cleaved as a signal peptide. Composition is skewed to basic and acidic residues over residues 32–82 (KDFT…RSQS) and 130–141 (SRREEREEREQE). Disordered stretches follow at residues 32–194 (KDFT…NRFQ) and 384–407 (LRKH…NLRS). Residues 142–151 (QGSSSGSQRG) show a composition bias toward low complexity. Positions 152–181 (SGDERRQHRERRVHREEREQEQDSRSDSRR) are enriched in basic and acidic residues. The region spanning 186 to 344 (YHFSSNRFQT…TFNTRYEEIE (159 aa)) is the Cupin type-1 1 domain. The segment covering 390 to 402 (SSSGEGKPSESGP) has biased composition (low complexity). The Cupin type-1 2 domain occupies 403–569 (FNLRSNKPIY…TFPGSIEDVE (167 aa)). A glycan (N-linked (GlcNAc...) asparagine) is linked at N434. The disordered stretch occupies residues 476–495 (DQQRQQDEQEEEYEQGEEEV). Residues 483-492 (EQEEEYEQGE) show a composition bias toward acidic residues. The N-linked (GlcNAc...) asparagine glycan is linked to N519. Residues 580–589 (FANAQPQQQQ) show a composition bias toward low complexity. A disordered region spans residues 580-600 (FANAQPQQQQQREKEGRRGRR).

Belongs to the 7S seed storage protein family. Component of globulins complexes which accumulate in seeds.

Its function is as follows. Seed storage protein. Accumulates during seed development and is hydrolyzed after germination to provide a carbon and nitrogen source for the developing seedling. The polypeptide is Conglutin beta 1 (Lupinus angustifolius (Narrow-leaved blue lupine)).